A 217-amino-acid chain; its full sequence is Transmembrane protein 253 (217 aa).

A run of 4 helical transmembrane segments spans residues 33–53 (LVLAVSQLWLAVVVVPLAVSV), 62–82 (MATALPLGPGASGLLTGTVTL), 96–116 (MMIFNTFNLILGFIVVVVEVM), and 138–158 (LSAEAFTLGGVLVSVHALFLL). The disordered stretch occupies residues 187 to 217 (PGLENGPTVASTGANERVGQREQTRAALLPP).

It localises to the membrane. The polypeptide is Transmembrane protein 253 (TMEM253) (Homo sapiens (Human)).